The sequence spans 448 residues: Methionine aminopeptidase 2-1 (448 aa).

A disordered region spans residues 1–83 (MAAQVIPELQ…TQKAQTEPPR (83 aa)). Positions 32–48 (ENEDGDSEDDNGDDQGA) are enriched in acidic residues. The segment covering 59 to 73 (AKKKKKKKPKKKKKD) has biased composition (basic residues). Substrate is bound at residue histidine 198. Residues aspartate 218, aspartate 229, and histidine 298 each coordinate a divalent metal cation. Position 306 (histidine 306) interacts with substrate. A divalent metal cation contacts are provided by glutamate 334 and glutamate 429.

This sequence belongs to the peptidase M24A family. Methionine aminopeptidase eukaryotic type 2 subfamily. Requires Co(2+) as cofactor. The cofactor is Zn(2+). Mn(2+) is required as a cofactor. Fe(2+) serves as cofactor.

It localises to the cytoplasm. The catalysed reaction is Release of N-terminal amino acids, preferentially methionine, from peptides and arylamides.. In terms of biological role, cotranslationally removes the N-terminal methionine from nascent proteins. The N-terminal methionine is often cleaved when the second residue in the primary sequence is small and uncharged (Met-Ala-, Cys, Gly, Pro, Ser, Thr, or Val). This chain is Methionine aminopeptidase 2-1, found in Ajellomyces capsulatus (strain G186AR / H82 / ATCC MYA-2454 / RMSCC 2432) (Darling's disease fungus).